The following is a 268-amino-acid chain: Tryptophan synthase alpha chain (268 aa).

Active-site proton acceptor residues include glutamate 49 and aspartate 60.

It belongs to the TrpA family. As to quaternary structure, tetramer of two alpha and two beta chains.

The catalysed reaction is (1S,2R)-1-C-(indol-3-yl)glycerol 3-phosphate + L-serine = D-glyceraldehyde 3-phosphate + L-tryptophan + H2O. The protein operates within amino-acid biosynthesis; L-tryptophan biosynthesis; L-tryptophan from chorismate: step 5/5. Functionally, the alpha subunit is responsible for the aldol cleavage of indoleglycerol phosphate to indole and glyceraldehyde 3-phosphate. This is Tryptophan synthase alpha chain from Yersinia pseudotuberculosis serotype O:3 (strain YPIII).